Consider the following 211-residue polypeptide: Heat shock 70 kDa protein 4L (211 aa).

At Ser-161 the chain carries Phosphoserine.

It belongs to the heat shock protein 70 family. As to quaternary structure, homodimer.

It localises to the cytoplasm. The protein localises to the nucleus. Possesses chaperone activity in vitro where it inhibits aggregation of citrate synthase. This Mesocricetus auratus (Golden hamster) protein is Heat shock 70 kDa protein 4L.